The sequence spans 149 residues: Nucleoside diphosphate kinase (149 aa).

ATP is bound by residues Lys9, Phe57, Arg85, Thr91, Arg102, and Asn112. Catalysis depends on His115, which acts as the Pros-phosphohistidine intermediate.

The protein belongs to the NDK family. Requires Mg(2+) as cofactor.

It localises to the cytoplasm. It catalyses the reaction a 2'-deoxyribonucleoside 5'-diphosphate + ATP = a 2'-deoxyribonucleoside 5'-triphosphate + ADP. It carries out the reaction a ribonucleoside 5'-diphosphate + ATP = a ribonucleoside 5'-triphosphate + ADP. In terms of biological role, major role in the synthesis of nucleoside triphosphates other than ATP. The ATP gamma phosphate is transferred to the NDP beta phosphate via a ping-pong mechanism, using a phosphorylated active-site intermediate. The polypeptide is Nucleoside diphosphate kinase (Methanospirillum hungatei JF-1 (strain ATCC 27890 / DSM 864 / NBRC 100397 / JF-1)).